The sequence spans 121 residues: Holin-like protein CidA 1 (121 aa).

4 consecutive transmembrane segments (helical) span residues 7–24 (SGQILLLFCFAWTGEWIA), 28–50 (HLPVPGSIIGIFLLLISLKFNLV), 62–81 (LLKELILFFIPSAVAVIRYR), and 91–113 (LILIIMISTLCVTLVTGLLTELL).

This sequence belongs to the CidA/LrgA family. CidA subfamily.

Its subcellular location is the cell membrane. Functionally, increases the activity of extracellular murein hydrolases possibly by mediating their export via hole formation. Inhibited by the antiholin-like proteins LrgAB. In an unstressed cell, the LrgAB products probably inhibit the function of the CidA protein. When a cell is stressed by the addition of antibiotics or by other factors in the environment, CidA possibly oligomerizes within the bacterial cell membrane, creating lesions that disrupt the proton motive force, which in turn results in loss of cell viability. These lesions are also hypothesized to regulate the subsequent cell lysis by either allowing the murein hydrolases access to the cell wall substrate and/or regulating their activity by a possible change in the cell wall pH that results from loss of membrane potential. This is Holin-like protein CidA 1 (cidA1) from Bacillus cereus (strain ATCC 14579 / DSM 31 / CCUG 7414 / JCM 2152 / NBRC 15305 / NCIMB 9373 / NCTC 2599 / NRRL B-3711).